Consider the following 596-residue polypeptide: Beta-fructofuranosidase, insoluble isoenzyme 7 (596 aa).

The N-terminal stretch at 1-24 (MARLGLAVCAASFHLFLLLASTSS) is a signal peptide. Residues 51–54 (WQND), glutamine 70, and tryptophan 78 each bind substrate. The active site involves aspartate 54. Asparagine 82 carries N-linked (GlcNAc...) asparagine glycosylation. Substrate contacts are provided by residues 115–116 (WS), 179–180 (RD), and glutamate 234. Asparagine 330 carries N-linked (GlcNAc...) asparagine glycosylation. Cysteine 432 and cysteine 478 are joined by a disulfide. Asparagine 552 carries an N-linked (GlcNAc...) asparagine glycan.

Belongs to the glycosyl hydrolase 32 family. As to expression, expressed in roots, leaves and flowers. Weakly expressed in seeds.

The protein resides in the secreted. Its subcellular location is the extracellular space. The protein localises to the apoplast. It is found in the cell wall. The enzyme catalyses Hydrolysis of terminal non-reducing beta-D-fructofuranoside residues in beta-D-fructofuranosides.. May play a role in sucrose partitioning during seed development. The protein is Beta-fructofuranosidase, insoluble isoenzyme 7 (CIN7) of Oryza sativa subsp. japonica (Rice).